The primary structure comprises 198 residues: MVATQNKNLKPNRKHQILESLALMLQNCPGQRITTAKLAAEVGFSEAALYRHFPSKARMFEGLIDFIEESIFSRINLILADHKEALVRCHHILHVLVVFAERNPGMCRILAGDALMGENERLRGRVHQFFEKLESQFKQVLRERKLREGKTFTINEAALASLLVSFAEGKISQYVRSGYSKKPSTDFNEQWQFLMANK.

The 61-residue stretch at 11-71 (PNRKHQILES…GLIDFIEESI (61 aa)) folds into the HTH tetR-type domain. A DNA-binding region (H-T-H motif) is located at residues 34–53 (TTAKLAAEVGFSEAALYRHF).

It belongs to the nucleoid occlusion factor SlmA family. As to quaternary structure, homodimer. Interacts with FtsZ.

The protein resides in the cytoplasm. It is found in the nucleoid. Required for nucleoid occlusion (NO) phenomenon, which prevents Z-ring formation and cell division over the nucleoid. Acts as a DNA-associated cell division inhibitor that binds simultaneously chromosomal DNA and FtsZ, and disrupts the assembly of FtsZ polymers. SlmA-DNA-binding sequences (SBS) are dispersed on non-Ter regions of the chromosome, preventing FtsZ polymerization at these regions. This chain is Nucleoid occlusion factor SlmA, found in Colwellia psychrerythraea (strain 34H / ATCC BAA-681) (Vibrio psychroerythus).